The sequence spans 254 residues: Ribosomal RNA large subunit methyltransferase E (254 aa).

Residues 1–18 (MTNSGKTGGKSGKGGTGG) show a composition bias toward gly residues. Residues 1–26 (MTNSGKTGGKSGKGGTGGARALKVRV) are disordered. Gly89, Trp91, Asp119, Asp135, and Asp159 together coordinate S-adenosyl-L-methionine. The active-site Proton acceptor is Lys199.

Belongs to the class I-like SAM-binding methyltransferase superfamily. RNA methyltransferase RlmE family.

The protein resides in the cytoplasm. The catalysed reaction is uridine(2552) in 23S rRNA + S-adenosyl-L-methionine = 2'-O-methyluridine(2552) in 23S rRNA + S-adenosyl-L-homocysteine + H(+). Its function is as follows. Specifically methylates the uridine in position 2552 of 23S rRNA at the 2'-O position of the ribose in the fully assembled 50S ribosomal subunit. The chain is Ribosomal RNA large subunit methyltransferase E from Parvibaculum lavamentivorans (strain DS-1 / DSM 13023 / NCIMB 13966).